The primary structure comprises 957 residues: Exoribonuclease II, mitochondrial (957 aa).

Residues 1–54 (MNYRQLFLLQNVNLESNYLLKRVCLSLKLSPCKLTRKFHHACPSSSKVLKYFRI) constitute a mitochondrion transit peptide. The 341-residue stretch at 503-843 (RVDLRHLKAF…FTHHQIQSVL (341 aa)) folds into the RNB domain.

The protein belongs to the RNR ribonuclease family.

It localises to the mitochondrion. The enzyme catalyses Exonucleolytic cleavage in the 3'- to 5'-direction to yield nucleoside 5'-phosphates.. Required for intron-independent turnover and processing of mitochondrial RNA. Participates in 3'-mtRNA processing where it hydrolyzes single-stranded RNA or partially double-stranded RNA with 3'-single-stranded tails. The protein is Exoribonuclease II, mitochondrial (rpm1) of Schizosaccharomyces pombe (strain 972 / ATCC 24843) (Fission yeast).